The sequence spans 496 residues: Probable glycine dehydrogenase (decarboxylating) subunit 2 (496 aa).

K265 carries the post-translational modification N6-(pyridoxal phosphate)lysine.

Belongs to the GcvP family. C-terminal subunit subfamily. As to quaternary structure, the glycine cleavage system is composed of four proteins: P, T, L and H. In this organism, the P 'protein' is a heterodimer of two subunits. It depends on pyridoxal 5'-phosphate as a cofactor.

It catalyses the reaction N(6)-[(R)-lipoyl]-L-lysyl-[glycine-cleavage complex H protein] + glycine + H(+) = N(6)-[(R)-S(8)-aminomethyldihydrolipoyl]-L-lysyl-[glycine-cleavage complex H protein] + CO2. Its function is as follows. The glycine cleavage system catalyzes the degradation of glycine. The P protein binds the alpha-amino group of glycine through its pyridoxal phosphate cofactor; CO(2) is released and the remaining methylamine moiety is then transferred to the lipoamide cofactor of the H protein. This is Probable glycine dehydrogenase (decarboxylating) subunit 2 from Thioalkalivibrio sulfidiphilus (strain HL-EbGR7).